The chain runs to 298 residues: Cholesterol 25-hydroxylase (298 aa).

An N-linked (GlcNAc...) asparagine glycan is attached at asparagine 5. The next 3 helical transmembrane spans lie at 38 to 58, 84 to 104, and 124 to 144; these read FFPV…FVVL, LLPC…PVTL, and LLSH…AWHL. Positions 128 to 263 constitute a Fatty acid hydroxylase domain; that stretch reads VLICLLLFDT…FTHWDKMLGT (136 aa). A Histidine box-1 motif is present at residues 142–146; the sequence is WHLLH. A Histidine box-2 motif is present at residues 157–161; that stretch reads HKVHH. The N-linked (GlcNAc...) asparagine glycan is linked to asparagine 163. The next 2 membrane-spanning stretches (helical) occupy residues 167–187 and 190–210; these read FALA…FFDV and VAML…NIWL. Positions 238-244 match the Histidine box-3 motif; that stretch reads HHDLHHS.

Belongs to the sterol desaturase family. Fe cation is required as a cofactor. N-glycosylated. Expressed in testicular macrophages at all stages, with the highest level in 10 day old animals.

Its subcellular location is the endoplasmic reticulum membrane. It carries out the reaction cholesterol + AH2 + O2 = 25-hydroxycholesterol + A + H2O. The catalysed reaction is cholesterol + NADPH + O2 + H(+) = 25-hydroxycholesterol + NADP(+) + H2O. In terms of biological role, catalyzes the formation of 25-hydroxycholesterol from cholesterol, leading to repress cholesterol biosynthetic enzymes. Plays a key role in cell positioning and movement in lymphoid tissues: 25-hydroxycholesterol is an intermediate in biosynthesis of 7-alpha,25-dihydroxycholesterol (7-alpha,25-OHC), an oxysterol that acts as a ligand for the G protein-coupled receptor GPR183/EBI2, a chemotactic receptor for a number of lymphoid cells. May play an important role in regulating lipid metabolism by synthesizing a corepressor that blocks sterol regulatory element binding protein (SREBP) processing. In testis, production of 25-hydroxycholesterol by macrophages plays a role in Leydig cell differentiation. Required to restrain inflammation in macrophages: production of 25-hydroxycholesterol protects macrophages from cholesterol overload, thereby preventing mitochondrial DNA release and subsequent activation of the AIM2 inflammasome. Interferon-stimulated gene which has broad antiviral activities against a wide range of enveloped viruses. Catalyzes the formation of 25-hydroxycholesterol from cholesterol, leading to repress cholesterol biosynthetic enzymes. Plays a key role in cell positioning and movement in lymphoid tissues: 25-hydroxycholesterol is an intermediate in biosynthesis of 7-alpha,25-dihydroxycholesterol (7-alpha,25-OHC), an oxysterol that acts as a ligand for the G protein-coupled receptor GPR183/EBI2, a chemotactic receptor for a number of lymphoid cells. May play an important role in regulating lipid metabolism by synthesizing a corepressor that blocks sterol regulatory element binding protein (SREBP) processing. As an interferon-stimulated gene, has broad antiviral activities against a wide range of enveloped viruses. Its product, 25-hydroxycholesterol, activates the ER-localized enzyme ACAT to induce internalization of accessible cholesterol on the plasma membrane and restricts virus-host membranes fusion which inhibits virus replication. In testis, production of 25-hydroxycholesterol by macrophages plays a role in Leydig cell differentiation. This is Cholesterol 25-hydroxylase from Rattus norvegicus (Rat).